Consider the following 500-residue polypeptide: Lysine--tRNA ligase (500 aa).

Mg(2+)-binding residues include glutamate 410 and glutamate 417.

Belongs to the class-II aminoacyl-tRNA synthetase family. As to quaternary structure, homodimer. The cofactor is Mg(2+).

The protein resides in the cytoplasm. It carries out the reaction tRNA(Lys) + L-lysine + ATP = L-lysyl-tRNA(Lys) + AMP + diphosphate. This chain is Lysine--tRNA ligase, found in Pseudomonas savastanoi pv. phaseolicola (strain 1448A / Race 6) (Pseudomonas syringae pv. phaseolicola (strain 1448A / Race 6)).